The following is a 1624-amino-acid chain: Pappalysin-1 (1624 aa).

The N-terminal stretch at 1-22 is a signal peptide; that stretch reads MRLWSWVLRLGLLSAALGCGLA. Positions 23 to 81 are excised as a propeptide; it reads ERPRRVRRDPRAVRPPRPAAGPATCATRAARGRRASPPPPPGGAWEAVRVPRRRQQRAA. The tract at residues 28-93 is disordered; sequence VRRDPRAVRP…AEEPSPPSRA (66 aa). A compositionally biased stretch (low complexity) spans 42-51; that stretch reads AGPATCATRA. Intrachain disulfides connect Cys141–Cys232, Cys324–Cys619, Cys329–Cys654, Cys411–Cys425, Cys421–Cys437, Cys454–Cys470, Cys471–Cys482, Cys580–Cys597, Cys584–Cys609, Cys707–Cys875, Cys710–Cys878, Cys750–Cys832, Cys772–Cys778, Cys944–Cys972, Cys957–Cys968, Cys980–Cys987, and Cys996–Cys1008. Residues 272–583 form a metalloprotease region; that stretch reads RGLHTPLPQL…ISEIQSCSDP (312 aa). 2 N-linked (GlcNAc...) asparagine glycosylation sites follow: Asn387 and Asn398. A glycan (N-linked (GlcNAc...) asparagine) is linked at Asn426. Residue Asn516 is glycosylated (N-linked (GlcNAc...) asparagine). His559 provides a ligand contact to Zn(2+). The active site involves Glu560. Positions 563 and 569 each coordinate Zn(2+). Residues Asn598, Asn616, and Asn722 are each glycosylated (N-linked (GlcNAc...) asparagine). N-linked (GlcNAc...) asparagine glycosylation is present at Asn822. N-linked (GlcNAc...) asparagine glycosylation occurs at Asn1023. 19 disulfide bridges follow: Cys1033-Cys1067, Cys1048-Cys1136, Cys1189-Cys1202, Cys1212-Cys1266, Cys1224-Cys1235, Cys1239-Cys1277, Cys1282-Cys1326, Cys1297-Cys1307, Cys1311-Cys1339, Cys1343-Cys1396, Cys1359-Cys1370, Cys1374-Cys1407, Cys1412-Cys1455, Cys1425-Cys1435, Cys1439-Cys1468, Cys1475-Cys1536, Cys1489-Cys1499, Cys1503-Cys1551, and Cys1555-Cys1573. Sushi domains follow at residues 1210-1279, 1280-1341, 1342-1409, 1410-1470, and 1473-1553; these read ADCP…ACEP, VDCG…LCEL, MCLA…TCVP, VTCD…VCRE, and GQCS…HCVK. 2 N-linked (GlcNAc...) asparagine glycosylation sites follow: Asn1219 and Asn1223. N-linked (GlcNAc...) asparagine glycosylation is present at Asn1320. A glycan (N-linked (GlcNAc...) asparagine) is linked at Asn1516.

The protein belongs to the peptidase M43B family. As to quaternary structure, homodimer; disulfide-linked. In pregnancy serum, predominantly found as a disulfide-linked 2:2 heterotetramer with the proform of PRG2. Zn(2+) is required as a cofactor. As to expression, detected in kidney, spleen, brain, ovary, breast, skin, prostate, uterus, and placenta.

The protein localises to the secreted. It carries out the reaction Cleavage of the 135-Met-|-Lys-136 bond in insulin-like growth factor binding protein (IGFBP)-4, and the 143-Ser-|-Lys-144 bond in IGFBP-5.. Metalloproteinase which specifically cleaves IGFBP-4 and IGFBP-5, resulting in release of bound IGF. Cleavage of IGFBP-4 is dramatically enhanced by the presence of IGF, whereas cleavage of IGFBP-5 is slightly inhibited by the presence of IGF. Isoform 2 cleaves IGFBP-4 very slowly compared to PAPP-A, but its ability to cleave IGFBP-5 is unaffected. This chain is Pappalysin-1 (Pappa), found in Mus musculus (Mouse).